The sequence spans 422 residues: L-2-hydroxyglutarate dehydrogenase (422 aa).

It belongs to the L2HGDH family. FAD is required as a cofactor.

The protein resides in the cell inner membrane. The enzyme catalyses (S)-2-hydroxyglutarate + a quinone = a quinol + 2-oxoglutarate. It functions in the pathway amino-acid degradation. Functionally, catalyzes the dehydrogenation of L-2-hydroxyglutarate (L2HG) to alpha-ketoglutarate and couples to the respiratory chain by feeding electrons from the reaction into the membrane quinone pool. Functions in a L-lysine degradation pathway that proceeds via cadaverine, glutarate and L-2-hydroxyglutarate. The chain is L-2-hydroxyglutarate dehydrogenase from Escherichia coli (strain K12).